The following is a 784-amino-acid chain: Ribosome biogenesis protein BOP1 homolog (784 aa).

A compositionally biased stretch (basic residues) spans 1-11 (MTKKLALKRRG). The interval 1-159 (MTKKLALKRR…DSDTSDEEDI (159 aa)) is disordered. Composition is skewed to acidic residues over residues 27–36 (SENEEEEEDL), 45–54 (EDSTDDEGID), 62–73 (SEELQFESDEEG), and 84–111 (AEED…EDEE). Basic and acidic residues-rich tracts occupy residues 112 to 123 (KVSKSKQSDDKP) and 138 to 148 (LPKRDSSKPEY). Acidic residues predominate over residues 149-158 (QDSDTSDEED). 7 WD repeats span residues 445–486 (GHTD…RTIE), 488–526 (DEVV…KVLV), 570–612 (THFK…SQIP), 615–653 (KSKG…LVKK), 656–695 (TNSK…KPYQ), 699–738 (LHRN…DLLQ), and 754–784 (RDEF…RLYT).

This sequence belongs to the WD repeat BOP1/ERB1 family.

Its subcellular location is the nucleus. It is found in the nucleolus. The protein localises to the nucleoplasm. Its function is as follows. Required for maturation of ribosomal RNAs and formation of the large ribosomal subunit. In Drosophila sechellia (Fruit fly), this protein is Ribosome biogenesis protein BOP1 homolog.